We begin with the raw amino-acid sequence, 725 residues long: Probable dipeptidyl-peptidase 5 (725 aa).

Residues 1 to 18 form the signal peptide; sequence MGALRWLSIAATASTALA. N-linked (GlcNAc...) asparagine glycans are attached at residues Asn75, Asn96, Asn153, Asn258, Asn383, and Asn453. The active-site Charge relay system is Ser563. N-linked (GlcNAc...) asparagine glycosylation is present at Asn610. Active-site charge relay system residues include Asp646 and His678.

Belongs to the peptidase S9C family.

It localises to the secreted. Its function is as follows. Extracellular dipeptidyl-peptidase which removes N-terminal dipeptides sequentially from polypeptides having unsubstituted N-termini. The polypeptide is Probable dipeptidyl-peptidase 5 (dpp5) (Aspergillus flavus (strain ATCC 200026 / FGSC A1120 / IAM 13836 / NRRL 3357 / JCM 12722 / SRRC 167)).